The primary structure comprises 589 residues: Protein NRT1/ PTR FAMILY 4.7 (589 aa).

12 consecutive transmembrane segments (helical) span residues G59–A79, A105–F125, T127–V147, V160–L180, F201–V221, W230–A250, I344–Q364, F383–P403, I429–K449, L471–F491, L520–L540, and F560–S580.

Belongs to the major facilitator superfamily. Proton-dependent oligopeptide transporter (POT/PTR) (TC 2.A.17) family. In terms of tissue distribution, expressed in flowers.

It localises to the membrane. In Arabidopsis thaliana (Mouse-ear cress), this protein is Protein NRT1/ PTR FAMILY 4.7 (NPF4.7).